A 308-amino-acid chain; its full sequence is MAALGGDGLRLLSVSRPERQPESAALSSPGPGLCCWVSVFSCFSLACSYVGSLYVWKSELPRDHPAVIKRRFTSVLVVSSLSPLCVLLWRELTGIQPGTSLLTLMGFRLEGIFPAALLPLLLTMILFLGPLMQLCMDCPCDLTDGLKVVLAPRSWARRLTDMRWLRNQVIAPLTEELVFRACMLPMLAPCTGLGPAVFTCPLFFGVAHFHHIIEQLRFRQSSVGSIFLSAGHLIGPVLCHSFCNYMGFPAVCAALEHPQKWPLLAGYALGVGLFLLLLQPLTDPKLYGSLPLCMLLERTGASETLLCS.

N-acetylalanine is present on Ala-2. 3 consecutive transmembrane segments (helical) span residues 25–45 (ALSS…CFSL), 75–95 (VLVV…LTGI), and 112–132 (IFPA…GPLM). Glu-175 acts as the Proton donor/acceptor in catalysis. A helical transmembrane segment spans residues 186 to 206 (MLAPCTGLGPAVFTCPLFFGV). The active-site Proton donor/acceptor is the His-208. A run of 2 helical transmembrane segments spans residues 233–253 (LIGP…AVCA) and 262–282 (PLLA…QPLT).

Belongs to the peptidase U48 family. Post-translationally, ubiquitinated. Undergoes 'Lys-48'- and 'Lys-63'-linked ubiquitination. 'Lys-48' ubiquitination induces its degradation. Deubiquitinated by USP17L2/USP17 that cleaves 'Lys-63'-linked ubiquitin chains.

It is found in the endoplasmic reticulum membrane. The enzyme catalyses Hydrolyzes the peptide bond -P2-(S-farnesyl or geranylgeranyl)C-P1'-P2'-P3'-COOH where P1' and P2' are amino acids with aliphatic sidechains and P3' is any C-terminal residue.. Its activity is regulated as follows. Deubiquitination by USP17L2/USP17 negatively regulates the proteolytic activity toward Ras GTPases. Functionally, protease involved in the processing of a variety of prenylated proteins containing the C-terminal CAAX motif, where C is a cysteine modified with an isoprenoid lipid, A is an aliphatic amino acid and X is any C-terminal amino acid. Proteolytically removes the C-terminal three residues of farnesylated and geranylated proteins, leaving the prenylated cysteine as the new C-terminus. Is able to process K-Ras, N-Ras, H-Ras, RAP1B and G-gamma-1. This is CAAX prenyl protease 2 (Rce1) from Rattus norvegicus (Rat).